A 378-amino-acid polypeptide reads, in one-letter code: MKLKYELKKTNSGARRGQLQFERGTVETPAFMPVGTYGTVKGMTPEEVKDTGAEILLGNTFHLWLRPGQEIMKLHGDLHDFMNWKGPILTDSGGFQVFSLGATRKITEEGVHFRNPVNGDKIFMDAEKSMEIQKDLGSDIVMIFDECTPYPATHKEAKDSMEMSLRWAQRSRDHFDKQENPNSLFGIVQGGVYEDLRDVSVKGLTEIGFDGYAVGGLAVGEPKEDMHRILEHTCPQLPEDKPRYLMGVGKPEDLVEGVRRGIDMFDCVMPTRNARNGHLFVTEGVIKIRNAKHKTDTTPLDSDCDCYTCKNYSKSYLHHLDRCNEILGARLNTIHNLRFYQRVMSDIRQSIDEDRFEEFVAEFYARMGREVPPLGKES.

Asp91 (proton acceptor) is an active-site residue. Substrate-binding positions include 91-95 (DSGGF), Asp145, Gln189, and Gly216. The tract at residues 247–253 (GVGKPED) is RNA binding. Asp266 acts as the Nucleophile in catalysis. An RNA binding; important for wobble base 34 recognition region spans residues 271–275 (TRNAR). Zn(2+) is bound by residues Cys304, Cys306, Cys309, and His335.

This sequence belongs to the queuine tRNA-ribosyltransferase family. In terms of assembly, homodimer. Within each dimer, one monomer is responsible for RNA recognition and catalysis, while the other monomer binds to the replacement base PreQ1. It depends on Zn(2+) as a cofactor.

It carries out the reaction 7-aminomethyl-7-carbaguanine + guanosine(34) in tRNA = 7-aminomethyl-7-carbaguanosine(34) in tRNA + guanine. Its pathway is tRNA modification; tRNA-queuosine biosynthesis. Its function is as follows. Catalyzes the base-exchange of a guanine (G) residue with the queuine precursor 7-aminomethyl-7-deazaguanine (PreQ1) at position 34 (anticodon wobble position) in tRNAs with GU(N) anticodons (tRNA-Asp, -Asn, -His and -Tyr). Catalysis occurs through a double-displacement mechanism. The nucleophile active site attacks the C1' of nucleotide 34 to detach the guanine base from the RNA, forming a covalent enzyme-RNA intermediate. The proton acceptor active site deprotonates the incoming PreQ1, allowing a nucleophilic attack on the C1' of the ribose to form the product. After dissociation, two additional enzymatic reactions on the tRNA convert PreQ1 to queuine (Q), resulting in the hypermodified nucleoside queuosine (7-(((4,5-cis-dihydroxy-2-cyclopenten-1-yl)amino)methyl)-7-deazaguanosine). In Vibrio atlanticus (strain LGP32) (Vibrio splendidus (strain Mel32)), this protein is Queuine tRNA-ribosyltransferase.